We begin with the raw amino-acid sequence, 1191 residues long: DNA topoisomerase 2 (1191 aa).

ATP-binding positions include asparagine 64, asparagine 95, and 142–149 (GTNGVGLK). Positions 437, 538, and 540 each coordinate Mg(2+). The Topo IIA-type catalytic domain maps to 706–1173 (IPNFLDGMTR…PGASVWLEEI (468 aa)). Residue tyrosine 799 is the O-(5'-phospho-DNA)-tyrosine intermediate of the active site.

It belongs to the type II topoisomerase family. Mg(2+) serves as cofactor. Requires Mn(2+) as cofactor. It depends on Ca(2+) as a cofactor.

It is found in the host cytoplasm. The catalysed reaction is ATP-dependent breakage, passage and rejoining of double-stranded DNA.. In terms of biological role, type II topoisomerase. Processively relaxes supercoiled DNA. Displays DNA-supercoiling activity only when associated with the viral histone-like protein. This chain is DNA topoisomerase 2, found in Ornithodoros (relapsing fever ticks).